The following is a 553-amino-acid chain: Efflux pump alnA (553 aa).

Residues 1 to 21 (MSSDDTVKQEHSCSADSEKQD) show a composition bias toward basic and acidic residues. The segment at 1 to 36 (MSSDDTVKQEHSCSADSEKQDSSCASDNEQPKEPQS) is disordered. A run of 13 helical transmembrane segments spans residues 40–60 (IHGL…FLFA), 85–105 (WSGV…LQIF), 110–130 (IKWM…ICGA), 136–156 (MLIG…VGVM), 174–194 (AMGL…GAFT), 202–222 (WSFY…IFLL), 243–263 (LVGT…INFA), 270–290 (SEPG…VFGI), 319–339 (LLFV…YVIP), 355–375 (VRLL…GYLA), 382–402 (IPWY…MYTI), 413–433 (GYSS…HAVA), and 522–542 (TYIL…GMKW).

Belongs to the major facilitator superfamily. TCR/Tet family.

It is found in the cell membrane. In terms of biological role, efflux pump; part of the gene cluster that mediates the biosynthesis of asperlin, a polyketide showing anti-inflammatory, antitumor and antibiotic activities. Is probably involved in the efflux of asperlin. The sequence is that of Efflux pump alnA from Emericella nidulans (strain FGSC A4 / ATCC 38163 / CBS 112.46 / NRRL 194 / M139) (Aspergillus nidulans).